Reading from the N-terminus, the 80-residue chain is Large ribosomal subunit protein uL24 (80 aa).

Residues 53 to 80 are disordered; the sequence is HMRPTQGQTQGSIIEREFPIHSSNVKKS.

This sequence belongs to the universal ribosomal protein uL24 family. In terms of assembly, part of the 50S ribosomal subunit.

Its function is as follows. One of two assembly initiator proteins, it binds directly to the 5'-end of the 23S rRNA, where it nucleates assembly of the 50S subunit. One of the proteins that surrounds the polypeptide exit tunnel on the outside of the subunit. The chain is Large ribosomal subunit protein uL24 from Pelodictyon phaeoclathratiforme (strain DSM 5477 / BU-1).